The following is a 147-amino-acid chain: Acidic phospholipase A2 S9-53F (147 aa).

The first 19 residues, 1 to 19 (MYPAHLLVLLAVCVSLLGA), serve as a signal peptide directing secretion. Residues 20–27 (SDIPPQPL) constitute a propeptide that is removed on maturation. 7 disulfide bridges follow: C38-C99, C54-C146, C56-C72, C71-C127, C78-C120, C88-C113, and C106-C118. Ca(2+) contacts are provided by Y55, G57, and G59. H75 is a catalytic residue. D76 contacts Ca(2+). D121 is a catalytic residue.

It belongs to the phospholipase A2 family. Group I subfamily. D49 sub-subfamily. Ca(2+) is required as a cofactor. As to expression, expressed by the venom gland.

The protein localises to the secreted. It carries out the reaction a 1,2-diacyl-sn-glycero-3-phosphocholine + H2O = a 1-acyl-sn-glycero-3-phosphocholine + a fatty acid + H(+). Functionally, snake venom phospholipase A2 (PLA2) that inhibits collagen-induced platelet aggregation. PLA2 catalyzes the calcium-dependent hydrolysis of the 2-acyl groups in 3-sn-phosphoglycerides. The sequence is that of Acidic phospholipase A2 S9-53F from Austrelaps superbus (Lowland copperhead snake).